The following is a 181-amino-acid chain: CAPA peptides (181 aa).

The N-terminal stretch at 1 to 22 (MQDNRFFILMILLVFSTSLNQG) is a signal peptide. The propeptide occupies 23–29 (QKLKAND). Residue I41 is modified to Isoleucine amide. Residues 44-54 (NSEISSFSRSE) constitute a propeptide that is removed on maturation. I65 bears the Isoleucine amide mark. The propeptide occupies 68 to 181 (SDVSSFDNLN…ENERDTANFL (114 aa)). Residues 159–181 (TQGQGGYTPRLGRENERDTANFL) form a disordered region. Residues 169 to 181 (LGRENERDTANFL) show a composition bias toward basic and acidic residues.

A pyrokinin potentially constituted by residues Asn-158 to Gly-170 has so far not been detected and might be completely absent in ants. Periviscerokinin 1 and 2 are expressed in central brain, antennal lobes and gnathal, thoracic and abominal ganglia. Periviscerokinin 2 is also expressed in the retrocerebral complex (at protein level).

It localises to the secreted. Functionally, periviscerokinins mediate visceral muscle contractile activity (myotropic activity). The chain is CAPA peptides from Camponotus floridanus (Florida carpenter ant).